Consider the following 149-residue polypeptide: Large ribosomal subunit protein uL15 (149 aa).

Residues 30 to 63 (GLGKTAGRGHKGSFARKGGGKIKPGFEGGQTPMQ) form a disordered region. The span at 36-49 (GRGHKGSFARKGGG) shows a compositional bias: basic residues.

The protein belongs to the universal ribosomal protein uL15 family. In terms of assembly, part of the 50S ribosomal subunit.

In terms of biological role, binds to the 23S rRNA. The protein is Large ribosomal subunit protein uL15 of Xylella fastidiosa (strain 9a5c).